A 301-amino-acid polypeptide reads, in one-letter code: MEKGRIIRSLSGYYDIETDKGKIQRTRARGEFRKSGQKPIVGDFVDFESENDDGLIWKIYPRINALVRPPIANIDIAVIVTALKEPNFAANLLDRQLVALEAAHVKPVIYFSKADLLTDEAYAAITIIAEDYRQIGYTVLLPASNNNVVARQALQSLLDGRVSVFMGQTGAGKSTLLNQLSPKLGLETGIVSKALSRGKHTTRQVTLIKVNDALIADTPGFSSYEVFDFSAEALDDYFPEFVAVRDGCRFRGCLHLNEPACAVKEAVSLGAIPESRYNSYKAFYELIKSQKPKYKTDNRNF.

In terms of domain architecture, CP-type G spans 63 to 224 (INALVRPPIA…IADTPGFSSY (162 aa)). GTP is bound by residues 112-115 (SKAD) and 167-175 (GQTGAGKST). Zn(2+) is bound by residues Cys248, Cys253, His255, and Cys261.

It belongs to the TRAFAC class YlqF/YawG GTPase family. RsgA subfamily. As to quaternary structure, monomer. Associates with 30S ribosomal subunit, binds 16S rRNA. It depends on Zn(2+) as a cofactor.

It is found in the cytoplasm. Functionally, one of several proteins that assist in the late maturation steps of the functional core of the 30S ribosomal subunit. Helps release RbfA from mature subunits. May play a role in the assembly of ribosomal proteins into the subunit. Circularly permuted GTPase that catalyzes slow GTP hydrolysis, GTPase activity is stimulated by the 30S ribosomal subunit. This Leuconostoc citreum (strain KM20) protein is Small ribosomal subunit biogenesis GTPase RsgA.